The following is a 309-amino-acid chain: G-protein coupled receptor 35 (309 aa).

Topologically, residues methionine 1–tyrosine 24 are extracellular. N-linked (GlcNAc...) asparagine glycosylation is present at asparagine 2. Residues alanine 25 to phenylalanine 45 traverse the membrane as a helical segment. The Cytoplasmic portion of the chain corresponds to cysteine 46–arginine 56. A helical transmembrane segment spans residues isoleucine 57–leucine 77. Over histidine 78–glutamine 90 the chain is Extracellular. The cysteines at positions 89 and 162 are disulfide-linked. The helical transmembrane segment at leucine 91 to valine 112 threads the bilayer. The Cytoplasmic segment spans residues aspartate 113 to alanine 135. A helical transmembrane segment spans residues valine 136–isoleucine 156. Residues glutamine 157–alanine 174 are Extracellular-facing. Residues phenylalanine 175–valine 195 form a helical membrane-spanning segment. At threonine 196–methionine 218 the chain is on the cytoplasmic side. The helical transmembrane segment at valine 219 to valine 239 threads the bilayer. At arginine 240–leucine 258 the chain is on the extracellular side. The chain crosses the membrane as a helical span at residues tyrosine 259–methionine 279. Residues alanine 280–alanine 309 lie on the Cytoplasmic side of the membrane. Residues serine 287 and serine 294 each carry the phosphoserine modification. Serine 300 and serine 303 each carry phosphoserine; by GRK5 and GRK6. The residue at position 307 (threonine 307) is a Phosphothreonine.

It belongs to the G-protein coupled receptor 1 family. Interacts with GNA13. Interacts with ARRB2. Post-translationally, multiply phosphorylated in clusters of serines and threonines in the C-terminal tail. Phosphorylation of Ser-300 and Ser-303 is mediated by GRK5 and/or GRK6. Predominantly expressed in immune and gastrointestinal tissues.

The protein localises to the cell membrane. Its function is as follows. G-protein coupled receptor that binds to several ligands including the tryptophan metabolite kynurenic acid (KYNA), lysophosphatidic acid (LPA) or 5-hydroxyindoleacetic acid (5-HIAA) with high affinity, leading to rapid and transient activation of numerous intracellular signaling pathways. Plays a role in neutrophil recruitment to sites of inflammation and bacterial clearance through the major serotonin metabolite 5-HIAA that acts as a physiological ligand. Stimulates lipid metabolism, thermogenic, and anti-inflammatory gene expression in adipose tissue once activated by kynurenic acid. In macrophages, activation by lysophosphatidic acid promotes GPR35-induced signaling with a distinct transcriptional profile characterized by TNF production associated with ERK and NF-kappa-B activation. In turn, induces chemotaxis of macrophages. In Homo sapiens (Human), this protein is G-protein coupled receptor 35 (GPR35).